A 742-amino-acid chain; its full sequence is Photosystem I P700 chlorophyll a apoprotein A2 2 (742 aa).

A run of 8 helical transmembrane segments spans residues 46 to 69 (IFAT…FHVA), 135 to 158 (LYQG…LHLQ), 175 to 199 (LNHH…HVAI), 273 to 291 (MAHH…GHMY), 334 to 357 (LHFQ…QHMY), 373 to 399 (AALY…IFWV), 421 to 443 (AIIS…LYVH), and 524 to 542 (FLVH…LICV). [4Fe-4S] cluster is bound by residues cysteine 566 and cysteine 575. The next 2 membrane-spanning stretches (helical) occupy residues 583–604 (SFYL…YWHW) and 651–673 (LSVW…MFLI). Chlorophyll a-binding residues include histidine 662, methionine 670, and tyrosine 678. Phylloquinone is bound at residue tryptophan 679. A helical transmembrane segment spans residues 715–735 (LVGLAHFTVGYILTYAAFLIA).

It belongs to the PsaA/PsaB family. In terms of assembly, the PsaA/B heterodimer binds the P700 chlorophyll special pair and subsequent electron acceptors. PSI consists of a core antenna complex that captures photons, and an electron transfer chain that converts photonic excitation into a charge separation. The cyanobacterial PSI reaction center is composed of one copy each of PsaA,B,C,D,E,F,I,J,K,L,M and X, and forms trimeric complexes. Requires PSI electron transfer chain: 5 chlorophyll a, 1 chlorophyll a', 2 phylloquinones and 3 4Fe-4S clusters. PSI core antenna: 90 chlorophyll a, 22 carotenoids, 3 phospholipids and 1 galactolipid. P700 is a chlorophyll a/chlorophyll a' dimer, A0 is one or more chlorophyll a, A1 is one or both phylloquinones and FX is a shared 4Fe-4S iron-sulfur center. as cofactor.

The protein resides in the cellular thylakoid membrane. The enzyme catalyses reduced [plastocyanin] + hnu + oxidized [2Fe-2S]-[ferredoxin] = oxidized [plastocyanin] + reduced [2Fe-2S]-[ferredoxin]. In terms of biological role, psaA and PsaB bind P700, the primary electron donor of photosystem I (PSI), as well as the electron acceptors A0, A1 and FX. PSI is a plastocyanin/cytochrome c6-ferredoxin oxidoreductase, converting photonic excitation into a charge separation, which transfers an electron from the donor P700 chlorophyll pair to the spectroscopically characterized acceptors A0, A1, FX, FA and FB in turn. Oxidized P700 is reduced on the lumenal side of the thylakoid membrane by plastocyanin or cytochrome c6. In Trichormus variabilis (strain ATCC 29413 / PCC 7937) (Anabaena variabilis), this protein is Photosystem I P700 chlorophyll a apoprotein A2 2.